A 407-amino-acid chain; its full sequence is Aspartokinase (407 aa).

7–10 (KFGG) serves as a coordination point for ATP. 25–30 (RVIEEV) lines the substrate pocket. Ser41 is a binding site for ATP. Residues 47-49 (TDE), Glu74, 125-126 (LD), 150-153 (RGGS), and Ser153 contribute to the substrate site. ATP contacts are provided by residues 173–174 (TD) and 179–184 (FTTDPR). ACT domains lie at 264–338 (VTVV…LAKV) and 340–407 (IVGS…AVRS). Residues 289-291 (NVD), Gln295, 351-352 (VA), 365-366 (EI), and 372-373 (SE) each bind substrate.

This sequence belongs to the aspartokinase family. In terms of assembly, tetramer consisting of 2 isoforms Alpha (catalytic and regulation) and of a homodimer of 2 isoforms Beta (regulation).

It catalyses the reaction L-aspartate + ATP = 4-phospho-L-aspartate + ADP. It participates in amino-acid biosynthesis; L-lysine biosynthesis via DAP pathway; (S)-tetrahydrodipicolinate from L-aspartate: step 1/4. Its pathway is amino-acid biosynthesis; L-methionine biosynthesis via de novo pathway; L-homoserine from L-aspartate: step 1/3. The protein operates within amino-acid biosynthesis; L-threonine biosynthesis; L-threonine from L-aspartate: step 1/5. Its activity is regulated as follows. Lysine-sensitive. Its function is as follows. Catalyzes the phosphorylation of the beta-carboxyl group of aspartic acid with ATP to yield 4-phospho-L-aspartate, which is involved in the branched biosynthetic pathway leading to the biosynthesis of amino acids threonine, isoleucine and methionine. The chain is Aspartokinase (lysC) from Geobacillus stearothermophilus (Bacillus stearothermophilus).